The sequence spans 113 residues: Na(+)/H(+) antiporter subunit C (113 aa).

The next 3 helical transmembrane spans lie at 4 to 21 (LMAV…YLLL), 28 to 47 (VIIG…LTMG), and 67 to 89 (PLPQ…FILV).

This sequence belongs to the CPA3 antiporters (TC 2.A.63) subunit C family. As to quaternary structure, forms a heterooligomeric complex that consists of seven subunits: MrpA, MrpB, MrpC, MrpD, MrpE, MrpF and MrpG.

It is found in the cell membrane. Its function is as follows. Mrp complex is a Na(+)/H(+) antiporter that is considered to be the major Na(+) excretion system in B.subtilis. Has a major role in Na(+) resistance and a minor role in Na(+)- and K(+)-dependent pH homeostasis as compared to TetB. MrpA may be the actual Na(+)/H(+) antiporter, although the six other Mrp proteins are all required for Na(+)/H(+) antiport activity and Na(+) resistance. MrpA is required for initiation of sporulation when external Na(+) concentration increases. Also transports Li(+) but not K(+), Ca(2+) or Mg(2+). The protein is Na(+)/H(+) antiporter subunit C (mrpC) of Bacillus subtilis (strain 168).